An 83-amino-acid polypeptide reads, in one-letter code: Small ribosomal subunit protein bS20 (83 aa).

Positions 60–83 (ASKGLIHKNKASRDKSRLAAKLAN) are disordered.

The protein belongs to the bacterial ribosomal protein bS20 family.

Its function is as follows. Binds directly to 16S ribosomal RNA. This is Small ribosomal subunit protein bS20 from Streptococcus thermophilus (strain CNRZ 1066).